The sequence spans 353 residues: Quinolinate synthase (353 aa).

H47 and S68 together coordinate iminosuccinate. C113 contributes to the [4Fe-4S] cluster binding site. Residues 139-141 (YAN) and S156 contribute to the iminosuccinate site. C200 contacts [4Fe-4S] cluster. Residues 226–228 (HPE) and T243 contribute to the iminosuccinate site. Residue C297 participates in [4Fe-4S] cluster binding.

Belongs to the quinolinate synthase family. Type 1 subfamily. [4Fe-4S] cluster is required as a cofactor.

The protein resides in the cytoplasm. The enzyme catalyses iminosuccinate + dihydroxyacetone phosphate = quinolinate + phosphate + 2 H2O + H(+). Its pathway is cofactor biosynthesis; NAD(+) biosynthesis; quinolinate from iminoaspartate: step 1/1. Functionally, catalyzes the condensation of iminoaspartate with dihydroxyacetone phosphate to form quinolinate. The sequence is that of Quinolinate synthase from Pectobacterium carotovorum subsp. carotovorum (strain PC1).